A 696-amino-acid chain; its full sequence is uncharacterized protein (696 aa).

In terms of domain architecture, GGDEF spans Ser293–Glu426. Residues Arg435–Asn689 enclose the EAL domain.

This is an uncharacterized protein from Synechocystis sp. (strain ATCC 27184 / PCC 6803 / Kazusa).